A 304-amino-acid polypeptide reads, in one-letter code: Sulfotransferase 1C3 (304 aa).

56–61 provides a ligand contact to 3'-phosphoadenylyl sulfate; that stretch reads KSGTTW. 115 to 117 is a binding site for substrate; it reads KTH. The active-site Proton acceptor is the histidine 117. Residues arginine 139, serine 147, tyrosine 202, 236–241, and 264–268 contribute to the 3'-phosphoadenylyl sulfate site; these read TSFDVM and FMRKG.

It belongs to the sulfotransferase 1 family. Not detectable in any of the tissues tested. In terms of tissue distribution, expressed in the small intestine.

Its subcellular location is the cytoplasm. It catalyses the reaction an alcohol + 3'-phosphoadenylyl sulfate = an alkyl sulfate + adenosine 3',5'-bisphosphate + H(+). The catalysed reaction is a phenol + 3'-phosphoadenylyl sulfate = an aryl sulfate + adenosine 3',5'-bisphosphate + H(+). The enzyme catalyses lithocholate + 3'-phosphoadenylyl sulfate = lithocholate sulfate + adenosine 3',5'-bisphosphate + H(+). In terms of biological role, sulfotransferase that utilizes 3'-phospho-5'-adenylyl sulfate (PAPS) as sulfonate donor. Has sulfotransferase activity towards various substrates, such as bile acids, thyroid hormones and toward xenobiotic compounds such as chloro phenols and hydroxypyrenes. Lithocholic acid appears to be the best substrate among the endogenous compounds tested and 3,3',5,5'-tetrachloro-4,4'-biphenyldiol shows the highest specific activity among the xenobiotic compounds. Exhibits weak sulphating activity and only toward chloro phenols (pentachlorophenol and 3,3',5,5'-tetrachloro-4,4'-biphenyldiol). This is Sulfotransferase 1C3 (SULT1C3) from Homo sapiens (Human).